Reading from the N-terminus, the 798-residue chain is Integrin beta-1 (798 aa).

The N-terminal stretch at 1–20 is a signal peptide; sequence MNLQLIFWIGLISSICCVFG. Over 21–728 the chain is Extracellular; sequence QADENRCLKA…ETPECPTGPD (708 aa). The 51-residue stretch at 26–76 folds into the PSI domain; the sequence is RCLKANAKSCGECIQAGPNCGWCVNSTFLQEGMPTSARCDDLEALKKKGCH. Cystine bridges form between Cys27/Cys45, Cys35/Cys464, Cys38/Cys64, Cys48/Cys75, Cys207/Cys213, Cys261/Cys301, Cys401/Cys415, Cys435/Cys462, Cys466/Cys486, Cys477/Cys489, Cys491/Cys500, Cys502/Cys533, Cys516/Cys531, Cys525/Cys536, Cys538/Cys553, Cys555/Cys576, Cys560/Cys574, Cys568/Cys579, Cys581/Cys590, Cys592/Cys615, Cys599/Cys613, Cys607/Cys618, Cys620/Cys630, Cys633/Cys636, Cys640/Cys691, Cys646/Cys665, Cys649/Cys661, and Cys699/Cys723. The N-linked (GlcNAc...) asparagine glycan is linked to Asn50. Positions 75–91 are enriched in basic and acidic residues; that stretch reads CHPDDIENPRGSKDVKK. A disordered region spans residues 75-107; that stretch reads CHPDDIENPRGSKDVKKNKNVTNRSKGTAEKLQ. N-linked (GlcNAc...) asparagine glycans are attached at residues Asn94 and Asn97. The region spanning 140 to 378 is the VWFA domain; it reads DYPIDLYYLM…QLIIDAYNSL (239 aa). Mg(2+) contacts are provided by Ser152 and Ser154. Ca(2+)-binding residues include Ser154, Asp157, Asp158, and Glu189. The segment at 207 to 213 is CX3CL1-binding; it reads CTSEQNC. Asn212 is a glycosylation site (N-linked (GlcNAc...) asparagine). Asn244, Asp246, Pro248, and Glu249 together coordinate Ca(2+). Glu249 lines the Mg(2+) pocket. Asn269 is a glycosylation site (N-linked (GlcNAc...) asparagine). The interval 295–314 is CX3CL1-binding; the sequence is LPNDGQCHLENDVYTMSHYY. Ca(2+) is bound at residue Ala362. Residues Asn363, Asn406, and Asn417 are each glycosylated (N-linked (GlcNAc...) asparagine). The interaction with TMEM182 stretch occupies residues 383–465; sequence ILENSKLPEG…IILQFICECE (83 aa). I-EGF domains are found at residues 466–501, 502–554, 555–591, and 592–631; these read CQNEGIPSSPKCHEGNGSFECGACRCNEGRVGRHCE, CSTD…KFCE, CDNFNCDRSNGLICGGNGVCKCRVCECNPNYTGSACD, and CSLDTTSCMATNGQICNGRGICECGACKCTDPKFQGPTCE. Asn481 carries an N-linked (GlcNAc...) asparagine glycan. Asn520 carries an N-linked (GlcNAc...) asparagine glycan. Residue Asn584 is glycosylated (N-linked (GlcNAc...) asparagine). The N-linked (GlcNAc...) asparagine glycan is linked to Asn669. The chain crosses the membrane as a helical span at residues 729 to 751; sequence IIPIVAGVVAGIVLIGLALLLIW. Residues 752 to 798 are Cytoplasmic-facing; the sequence is KLLMIIHDTREFAKFEKEKMNAKWDTGENPIYKSAVTTVVNPKYEGK. The signal for sorting from recycling endosomes; interaction with ACAP1 stretch occupies residues 762–767; sequence EFAKFE. A Phosphothreonine modification is found at Thr777. Tyr783 is modified (phosphotyrosine). Ser785 is subject to Phosphoserine. The segment at 785-792 is interaction with ITGB1BP1; the sequence is SAVTTVVN. Thr789 is modified (phosphothreonine). Residue Lys794 is modified to N6-acetyllysine; alternate. Lys794 is covalently cross-linked (Glycyl lysine isopeptide (Lys-Gly) (interchain with G-Cter in SUMO1); alternate).

The protein belongs to the integrin beta chain family. As to quaternary structure, interacts with seprase FAP (seprase); the interaction occurs at the cell surface of invadopodia membrane in a collagen-dependent manner. Heterodimer of an alpha and a beta subunit. Beta-1 associates with either alpha-1, alpha-2, alpha-3, alpha-4, alpha-5, alpha-6, alpha-7, alpha-8, alpha-9, alpha-10, alpha-11 or alpha-V. ITGA6:ITGB1 is found in a complex with CD9; interaction takes place in oocytes and is involved in sperm-egg fusion. Binds LGALS3BP and NMRK2, when associated with alpha-7, but not with alpha-5. Interacts with FLNA, FLNB, FLNC and RANBP9. Interacts with KRT1 in the presence of RACK1 and SRC. Interacts with JAML; integrin alpha-4/beta-1 may regulate leukocyte to endothelial cells adhesion by controlling JAML homodimerization. Interacts with RAB21. Interacts (via the cytoplasmic region) with RAB25 (via the hypervariable C-terminal region). Interacts with MYO10. Interacts with ITGB1BP1 (via C-terminal region); the interaction is a prerequisite for focal adhesion disassembly. Interacts with TLN1; the interaction is prevented by competitive binding of ITGB1BP1. Interacts with ACAP1; required for ITGB1 recycling. Interacts with ASAP3. Interacts with FERMT2; the interaction is inhibited in presence of ITGB1BP1. Interacts with DAB2. Interacts with FGR and HCK. Interacts with alpha-7A and alpha-7B in adult skeletal muscle. Interacts with alpha-7B in cardiomyocytes of adult heart. Interacts with EMP2; the interaction may be direct or indirect and ITGB1 has a heterodimer form. ITGA5:ITGB1 interacts with CCN3. ITGA4:ITGB1 is found in a ternary complex with CX3CR1 and CX3CL1. ITGA5:ITGB1 interacts with FBN1. ITGA5:ITGB1 acts as a receptor for fibronectin FN1 and mediates R-G-D-dependent cell adhesion to FN1. ITGA5:ITGB1 interacts with IL1B. Interacts with MDK. ITGA4:ITGB1 interacts with MDK; this interaction mediates MDK-induced osteoblast cells migration through PXN phosphorylation. ITGA6:ITGB1 interacts with MDK; this interaction mediates MDK-induced neurite-outgrowth. ITGA5:ITGB1 interacts with ACE2. Interacts with TMEM182 and LAMB1. Interacts with tensin TNS3; TNS3 also interacts with PEAK1, thus acting as an adapter molecule to bridge the association of PEAK1 with ITGB1. Interacts with tensin TNS4; the interaction displaces tensin TNS3 from the ITGB1 cytoplasmic tail and promotes ITGB1 stability. Integrin ITGA9:ITGB1 interacts with SPP1/OPN (via N-terminus). Integrin ITGA9:ITGB1 interacts with TNC/TNFN3 (via the 3rd Fibronectin type-III domain). Integrins ITGA4:ITGB1 and ITGA9:ITGB1 interact with SVEP1 (via Sushi domain 21); thereby inhibit Ca(2+) intracellular signaling and as a result repress vasocontraction. ITGA4:ITGB1 and ITGA5:ITGB1 interacts with SELP. Interacts with CD248. ITGA5:ITGB1 interacts with IGFBP1. ITGA4:ITGB1 interacts with BCAM. Interacts with ADGRG6.

It is found in the cell membrane. The protein localises to the cell projection. Its subcellular location is the invadopodium membrane. The protein resides in the ruffle membrane. It localises to the recycling endosome. It is found in the melanosome. The protein localises to the lamellipodium. Its subcellular location is the ruffle. The protein resides in the cell junction. It localises to the focal adhesion. Integrins alpha-1/beta-1, alpha-2/beta-1, alpha-10/beta-1 and alpha-11/beta-1 are receptors for collagen. Integrins alpha-1/beta-1 and alpha-2/beta-2 recognize the proline-hydroxylated sequence G-F-P-G-E-R in collagen. Integrins alpha-2/beta-1, alpha-3/beta-1, alpha-4/beta-1, alpha-5/beta-1, alpha-8/beta-1, alpha-10/beta-1, alpha-11/beta-1 and alpha-V/beta-1 are receptors for fibronectin. Alpha-4/beta-1 recognizes one or more domains within the alternatively spliced CS-1 and CS-5 regions of fibronectin. Integrin alpha-5/beta-1 is a receptor for fibrinogen. Integrin alpha-1/beta-1, alpha-2/beta-1, alpha-6/beta-1 and alpha-7/beta-1 are receptors for lamimin. Integrin alpha-6/beta-1 (ITGA6:ITGB1) is present in oocytes and is involved in sperm-egg fusion. Integrin alpha-4/beta-1 is a receptor for VCAM1 and recognizes the sequence Q-I-D-S in VCAM1. Integrin alpha-9/beta-1 is a receptor for VCAM1, cytotactin and osteopontin. It recognizes the sequence A-E-I-D-G-I-E-L in cytotactin. Integrin alpha-3/beta-1 is a receptor for epiligrin, thrombospondin and CSPG4. Integrin alpha-3/beta-1 provides a docking site for FAP (seprase) at invadopodia plasma membranes in a collagen-dependent manner and hence may participate in the adhesion, formation of invadopodia and matrix degradation processes, promoting cell invasion. Alpha-3/beta-1 may mediate with LGALS3 the stimulation by CSPG4 of endothelial cells migration. Integrin alpha-V/beta-1 is a receptor for vitronectin. Beta-1 integrins recognize the sequence R-G-D in a wide array of ligands. When associated with alpha-7/beta-1 integrin, regulates cell adhesion and laminin matrix deposition. Involved in promoting endothelial cell motility and angiogenesis. Involved in osteoblast compaction through the fibronectin fibrillogenesis cell-mediated matrix assembly process and the formation of mineralized bone nodules. May be involved in up-regulation of the activity of kinases such as PKC via binding to KRT1. Together with KRT1 and RACK1, serves as a platform for SRC activation or inactivation. Plays a mechanistic adhesive role during telophase, required for the successful completion of cytokinesis. ITGA4:ITGB1 binds to fractalkine (CX3CL1) and may act as its coreceptor in CX3CR1-dependent fractalkine signaling. ITGA4:ITGB1 and ITGA5:ITGB1 bind to PLA2G2A via a site (site 2) which is distinct from the classical ligand-binding site (site 1) and this induces integrin conformational changes and enhanced ligand binding to site 1. ITGA5:ITGB1 acts as a receptor for fibrillin-1 (FBN1) and mediates R-G-D-dependent cell adhesion to FBN1. ITGA5:ITGB1 is a receptor for IL1B and binding is essential for IL1B signaling. ITGA5:ITGB3 is a receptor for soluble CD40LG and is required for CD40/CD40LG signaling. Plays an important role in myoblast differentiation and fusion during skeletal myogenesis. ITGA9:ITGB1 may play a crucial role in SVEP1/polydom-mediated myoblast cell adhesion. Integrins ITGA9:ITGB1 and ITGA4:ITGB1 repress PRKCA-mediated L-type voltage-gated channel Ca(2+) influx and ROCK-mediated calcium sensitivity in vascular smooth muscle cells via their interaction with SVEP1, thereby inhibit vasocontraction. In Felis catus (Cat), this protein is Integrin beta-1 (ITGB1).